A 98-amino-acid chain; its full sequence is uncharacterized protein (98 aa).

The segment covering 19 to 31 (RRMSKRSKNKAKK) has biased composition (basic residues). Positions 19-47 (RRMSKRSKNKAKKERVPVEDRPPTPMPTS) are disordered.

Belongs to the lymphocryptovirus BNLF2B family.

This is an uncharacterized protein from Epstein-Barr virus (strain AG876) (HHV-4).